The primary structure comprises 512 residues: ATP synthase subunit alpha (512 aa).

An ATP-binding site is contributed by glycine 170–threonine 177.

It belongs to the ATPase alpha/beta chains family. As to quaternary structure, F-type ATPases have 2 components, CF(1) - the catalytic core - and CF(0) - the membrane proton channel. CF(1) has five subunits: alpha(3), beta(3), gamma(1), delta(1), epsilon(1). CF(0) has three main subunits: a(1), b(2) and c(9-12). The alpha and beta chains form an alternating ring which encloses part of the gamma chain. CF(1) is attached to CF(0) by a central stalk formed by the gamma and epsilon chains, while a peripheral stalk is formed by the delta and b chains.

It is found in the cell inner membrane. It carries out the reaction ATP + H2O + 4 H(+)(in) = ADP + phosphate + 5 H(+)(out). In terms of biological role, produces ATP from ADP in the presence of a proton gradient across the membrane. The alpha chain is a regulatory subunit. This is ATP synthase subunit alpha from Solibacter usitatus (strain Ellin6076).